Here is a 142-residue protein sequence, read N- to C-terminus: Large ribosomal subunit protein uL13 (142 aa).

It belongs to the universal ribosomal protein uL13 family. In terms of assembly, part of the 50S ribosomal subunit.

This protein is one of the early assembly proteins of the 50S ribosomal subunit, although it is not seen to bind rRNA by itself. It is important during the early stages of 50S assembly. The protein is Large ribosomal subunit protein uL13 of Pseudomonas entomophila (strain L48).